The primary structure comprises 273 residues: Putative ABC transporter ATP-binding protein DVU_1056 (273 aa).

An ABC transporter domain is found at 10–242 (LSLDDIHFTY…IHHGGEVAHE (233 aa)). 44–51 (GHNGSGKT) is a binding site for ATP. Residues 234–273 (HHGGEVAHEHPSRGCCHQHDGSHHHAGHDDDHPHTSQTTE) are disordered. A compositionally biased stretch (basic and acidic residues) spans 235–267 (HGGEVAHEHPSRGCCHQHDGSHHHAGHDDDHPH).

It belongs to the ABC transporter superfamily.

The protein localises to the cell inner membrane. Functionally, probably part of an ABC transporter complex. Responsible for energy coupling to the transport system. The polypeptide is Putative ABC transporter ATP-binding protein DVU_1056 (Nitratidesulfovibrio vulgaris (strain ATCC 29579 / DSM 644 / CCUG 34227 / NCIMB 8303 / VKM B-1760 / Hildenborough) (Desulfovibrio vulgaris)).